The primary structure comprises 430 residues: Potassium channel subfamily K member 12 (430 aa).

Over 1–38 (MSSRSPRPPPRRSRRRLPRPSCCCCCCRRSHLNEDTGR) the chain is Cytoplasmic. The interval 11–16 (RRSRRR) is ER retention/retrieval signal. A helical membrane pass occupies residues 39–59 (FVLLAALIGLYLVAGATVFSA). Residue asparagine 78 is glycosylated (N-linked (GlcNAc...) asparagine). Positions 114–134 (WDFPGAFYFVGTVVSTIGFGM) form an intramembrane region, pore-forming. Residues threonine 129, isoleucine 130, and glycine 131 each contribute to the K(+) site. The tract at residues 129–134 (TIGFGM) is selectivity filter 1. The chain crosses the membrane as a helical span at residues 145 to 165 (FLIAYGLFGCAGTILFFNLFL). The Cytoplasmic portion of the chain corresponds to 166-212 (ERIISLLAFIMRACRERQLRRSGLLPATFRRGSALSEADSLAGWKPS). A helical membrane pass occupies residues 213-233 (VYHVLLILGLFAVLLSCCASA). Residues 243–263 (YVDSLYFCFVTFSTIGFGDLV) constitute an intramembrane region (pore-forming). K(+)-binding residues include threonine 256, isoleucine 257, glycine 258, and phenylalanine 259. Positions 256–261 (TIGFGD) are selectivity filter 2. A helical transmembrane segment spans residues 282-302 (LFILLGVCCIYSLFNVISILI). The Cytoplasmic segment spans residues 303–430 (KQVLNWMLRK…NRLAETSASR (128 aa)).

This sequence belongs to the two pore domain potassium channel (TC 1.A.1.8) family. Homodimer. Heterodimer with KCNK13.

The protein resides in the cell membrane. The protein localises to the endoplasmic reticulum membrane. It catalyses the reaction K(+)(in) = K(+)(out). Functionally, k(+) channel subunit that may homo- and heterodimerize to form functional channels with distinct regulatory and gating properties. Can heterodimerize with KCNK13 subunit to conduct K(+) outward rectifying currents at the plasma membrane. The homodimers are mainly retained in the endoplasmic reticulum compartment and may be targeted to the cell surface upon phosphorylation or other activation signals yet to be elucidated. This Homo sapiens (Human) protein is Potassium channel subfamily K member 12.